Here is a 502-residue protein sequence, read N- to C-terminus: Acetylcholine receptor subunit alpha-type unc-63 (502 aa).

A signal peptide spans 1–23 (MGPNDHGFAYILIFLLLSPPTHA). The Extracellular portion of the chain corresponds to 24–263 (NRDANRLFED…HLRRKTLFYT (240 aa)). Residue asparagine 136 is glycosylated (N-linked (GlcNAc...) asparagine). Cysteine 151 and cysteine 165 form a disulfide bridge. Transmembrane regions (helical) follow at residues 264–284 (VNLI…FYLP), 293–313 (LCIS…EIIP), and 326–346 (LLFT…TLNV). Topologically, residues 347–470 (HYRSPTTHTM…WKYISVVMDR (124 aa)) are cytoplasmic. The chain crosses the membrane as a helical span at residues 471 to 491 (IFLITFTFACAFGTVVIIARA).

The protein belongs to the ligand-gated ion channel (TC 1.A.9) family. Acetylcholine receptor (TC 1.A.9.1) subfamily. In terms of assembly, component of nicotinic acetylcholine receptor. In muscles, composed of 2 non-alpha subunits lev-1 and unc-29, and 3 alpha subunits unc-38, unc-63 and lev-8. In cholinergic motoneurons, composed of 2 non-alpha subunits acr-2 and acr-3, and 3 alpha subunits unc-38, unc-63 and acr-12. Interacts with lev-10. As to expression, expressed in body wall muscles, in vulval muscles and in neurons.

Its subcellular location is the postsynaptic cell membrane. The protein resides in the cell membrane. In terms of biological role, alpha subunit of nicotinic acetylcholine receptor (nAChR). Probably acts in cholinergic motoneurons to regulate presynaptic neurotransmitter release, thereby ensuring normal level of excitation of cholinergic motoneurons during locomotion. Involved in nAChR sensitivity to nicotine and levamisole. This is Acetylcholine receptor subunit alpha-type unc-63 (unc-63) from Caenorhabditis elegans.